Consider the following 194-residue polypeptide: MLSAAALLPALLLGLLWPGAVRGRPPPGRLPPGPRQRRWDAALFARSVARLPAERRDAARDGDYLLGYKRLRRLYCNVGIGFHIQVLPDGRIDGIHSENRYSLLEISPVERGVVSIFGVRSGLFVAMNSKGKLYGSTHVNDECKFKEILLPNNYNAYESRIYPGMYIALSKNGRTKKGNKVSPTMTVTHFLPRI.

The first 23 residues, 1–23, serve as a signal peptide directing secretion; the sequence is MLSAAALLPALLLGLLWPGAVRG.

Belongs to the heparin-binding growth factors family. Reciprocal interactions may create a positive feedback loop between sonic hedgehog (SHH) and FGF4. As to expression, posterior ridge.

The protein localises to the secreted. Plays an important role in the regulation of embryonic development, cell proliferation, and cell differentiation. Required for normal limb development during embryogenesis. The polypeptide is Fibroblast growth factor 4 (FGF4) (Gallus gallus (Chicken)).